A 332-amino-acid chain; its full sequence is Ketol-acid reductoisomerase (NADP(+)) (332 aa).

In terms of domain architecture, KARI N-terminal Rossmann spans 2–182; that stretch reads ANIYYDEDAS…GATRAGLIET (181 aa). Residues 25–28, Ser51, Ser53, and 83–86 each bind NADP(+); these read YGSQ and DTVQ. Residue His108 is part of the active site. Residue Gly134 participates in NADP(+) binding. In terms of domain architecture, KARI C-terminal knotted spans 183–327; sequence TFKEETETDL…KELRKMMPWL (145 aa). Residues Asp191, Glu195, Glu227, and Glu231 each coordinate Mg(2+). Ser252 lines the substrate pocket.

It belongs to the ketol-acid reductoisomerase family. Mg(2+) serves as cofactor.

It carries out the reaction (2R)-2,3-dihydroxy-3-methylbutanoate + NADP(+) = (2S)-2-acetolactate + NADPH + H(+). The enzyme catalyses (2R,3R)-2,3-dihydroxy-3-methylpentanoate + NADP(+) = (S)-2-ethyl-2-hydroxy-3-oxobutanoate + NADPH + H(+). Its pathway is amino-acid biosynthesis; L-isoleucine biosynthesis; L-isoleucine from 2-oxobutanoate: step 2/4. It functions in the pathway amino-acid biosynthesis; L-valine biosynthesis; L-valine from pyruvate: step 2/4. Functionally, involved in the biosynthesis of branched-chain amino acids (BCAA). Catalyzes an alkyl-migration followed by a ketol-acid reduction of (S)-2-acetolactate (S2AL) to yield (R)-2,3-dihydroxy-isovalerate. In the isomerase reaction, S2AL is rearranged via a Mg-dependent methyl migration to produce 3-hydroxy-3-methyl-2-ketobutyrate (HMKB). In the reductase reaction, this 2-ketoacid undergoes a metal-dependent reduction by NADPH to yield (R)-2,3-dihydroxy-isovalerate. The polypeptide is Ketol-acid reductoisomerase (NADP(+)) (Sulfurihydrogenibium sp. (strain YO3AOP1)).